Here is a 336-residue protein sequence, read N- to C-terminus: Holliday junction branch migration complex subunit RuvB (336 aa).

A large ATPase domain (RuvB-L) region spans residues S4 to Y184. ATP is bound by residues I23, R24, G65, K68, T69, T70, E131–Y133, R174, Y184, and R221. T69 is a binding site for Mg(2+). The tract at residues S185–E255 is small ATPAse domain (RuvB-S). Residues Q258 to E336 are head domain (RuvB-H). DNA contacts are provided by R313 and R318.

This sequence belongs to the RuvB family. In terms of assembly, homohexamer. Forms an RuvA(8)-RuvB(12)-Holliday junction (HJ) complex. HJ DNA is sandwiched between 2 RuvA tetramers; dsDNA enters through RuvA and exits via RuvB. An RuvB hexamer assembles on each DNA strand where it exits the tetramer. Each RuvB hexamer is contacted by two RuvA subunits (via domain III) on 2 adjacent RuvB subunits; this complex drives branch migration. In the full resolvosome a probable DNA-RuvA(4)-RuvB(12)-RuvC(2) complex forms which resolves the HJ.

It localises to the cytoplasm. It carries out the reaction ATP + H2O = ADP + phosphate + H(+). The RuvA-RuvB-RuvC complex processes Holliday junction (HJ) DNA during genetic recombination and DNA repair, while the RuvA-RuvB complex plays an important role in the rescue of blocked DNA replication forks via replication fork reversal (RFR). RuvA specifically binds to HJ cruciform DNA, conferring on it an open structure. The RuvB hexamer acts as an ATP-dependent pump, pulling dsDNA into and through the RuvAB complex. RuvB forms 2 homohexamers on either side of HJ DNA bound by 1 or 2 RuvA tetramers; 4 subunits per hexamer contact DNA at a time. Coordinated motions by a converter formed by DNA-disengaged RuvB subunits stimulates ATP hydrolysis and nucleotide exchange. Immobilization of the converter enables RuvB to convert the ATP-contained energy into a lever motion, pulling 2 nucleotides of DNA out of the RuvA tetramer per ATP hydrolyzed, thus driving DNA branch migration. The RuvB motors rotate together with the DNA substrate, which together with the progressing nucleotide cycle form the mechanistic basis for DNA recombination by continuous HJ branch migration. Branch migration allows RuvC to scan DNA until it finds its consensus sequence, where it cleaves and resolves cruciform DNA. The protein is Holliday junction branch migration complex subunit RuvB of Legionella pneumophila (strain Lens).